The following is a 1108-amino-acid chain: Serine/threonine-protein kinase AKL1 (1108 aa).

Ser2 carries the N-acetylserine modification. Ser10 carries the post-translational modification Phosphoserine. The Protein kinase domain occupies 35–319; the sequence is VEVVNYLAEG…IYQVLYHLCE (285 aa). ATP contacts are provided by residues 41–49 and Lys70; that span reads LAEGGFAQI. The Proton acceptor role is filled by Asp181. The segment at 405-466 is disordered; that stretch reads IPSQNVGQEL…QSPGIEDKSI (62 aa). A Phosphoserine modification is found at Ser407. Basic and acidic residues predominate over residues 419–435; sequence ESQSDQRKSTLSEDKSS. The span at 436-449 shows a compositional bias: low complexity; the sequence is RTTSNANSSGTANN. A Phosphothreonine modification is found at Thr471. Over residues 493 to 513 the composition is skewed to polar residues; the sequence is KQSSDPTISEQSPRLNTQSLP. A disordered region spans residues 493 to 534; sequence KQSSDPTISEQSPRLNTQSLPQRQKSTSSYSSGGRSMKSTSY. Ser504 is modified (phosphoserine). A compositionally biased stretch (low complexity) spans 514-534; that stretch reads QRQKSTSSYSSGGRSMKSTSY. Phosphoserine is present on residues Ser541 and Ser574. The span at 590–629 shows a compositional bias: low complexity; the sequence is QQQGQRYQQAQNQTGTQGNTFPDESQYQSRVEQQQQQQDQ. 2 disordered regions span residues 590-663 and 765-791; these read QQQG…GDSG and EDMRNAQGGEPPILAGNSANEPMHSSS. Over residues 781–791 the composition is skewed to polar residues; the sequence is NSANEPMHSSS. A Phosphoserine modification is found at Ser801. The interval 807 to 838 is disordered; the sequence is AGKQSFQDTNEPQTGGIEDAGGSGTIKGSNNN. Positions 810–819 are enriched in polar residues; sequence QSFQDTNEPQ. A Phosphoserine modification is found at Ser846. The segment at 858–1108 is disordered; the sequence is GAAVSSFSSS…SFFSVFRSEK (251 aa). Residues 859–872 show a composition bias toward low complexity; it reads AAVSSFSSSSSSAS. Over residues 910–934 the composition is skewed to basic and acidic residues; it reads DDARRGKTAERRPLHNERGHKDQAR. The span at 935–976 shows a compositional bias: polar residues; sequence SSDASKSNQFKSKDFSSVSTRQPRQSLDLNFQEVNLSSPTLT. Phosphoserine occurs at positions 953 and 960. Positions 1006-1048 are enriched in basic and acidic residues; the sequence is ENKRHSTGHELSTRSNGKHETHRTGSKQRHDLERYRHSKDKDS. Glycyl lysine isopeptide (Lys-Gly) (interchain with G-Cter in ubiquitin) cross-links involve residues Lys1008 and Lys1046. Ser1048 carries the post-translational modification Phosphoserine. Positions 1049–1060 are enriched in low complexity; sequence NSSITISTSTPS. Positions 1071–1082 are enriched in basic and acidic residues; the sequence is QSLDLERVRREA. Ser1072 carries the post-translational modification Phosphoserine.

The protein belongs to the protein kinase superfamily. Ser/Thr protein kinase family.

It catalyses the reaction L-seryl-[protein] + ATP = O-phospho-L-seryl-[protein] + ADP + H(+). The catalysed reaction is L-threonyl-[protein] + ATP = O-phospho-L-threonyl-[protein] + ADP + H(+). Functionally, phosphorylates SCD5. This chain is Serine/threonine-protein kinase AKL1 (AKL1), found in Saccharomyces cerevisiae (strain ATCC 204508 / S288c) (Baker's yeast).